Consider the following 220-residue polypeptide: Aspartic protease inhibitor 2 (220 aa).

Residues 1–23 (MMKCLFLLCLCLLPIVVFSSTFT) form the signal peptide. The propeptide occupies 24–32 (SQNLIDLPS). The Vacuolar targeting signal signature appears at 26-31 (NLIDLP). An N-linked (GlcNAc...) asparagine glycan is attached at Asn51. 2 disulfide bridges follow: Cys80-Cys125 and Cys174-Cys185.

This sequence belongs to the protease inhibitor I3 (leguminous Kunitz-type inhibitor) family. As to expression, tubers.

It is found in the vacuole. Inhibitor of cathepsin D (aspartic protease). May also inhibit trypsin and chymotrypsin (serine proteases). Protects the plant by inhibiting proteases of invading organisms. This Solanum tuberosum (Potato) protein is Aspartic protease inhibitor 2.